Consider the following 468-residue polypeptide: Phosphomethylpyrimidine synthase (468 aa).

Substrate-binding positions include N80, M109, Y138, H173, 193–195 (SRG), 234–237 (DGLR), and E273. Residue H277 participates in Zn(2+) binding. Y300 provides a ligand contact to substrate. Zn(2+) is bound at residue H341. The [4Fe-4S] cluster site is built by C421, C424, and C429.

The protein belongs to the ThiC family. As to quaternary structure, homodimer. Requires [4Fe-4S] cluster as cofactor.

The enzyme catalyses 5-amino-1-(5-phospho-beta-D-ribosyl)imidazole + S-adenosyl-L-methionine = 4-amino-2-methyl-5-(phosphooxymethyl)pyrimidine + CO + 5'-deoxyadenosine + formate + L-methionine + 3 H(+). It participates in cofactor biosynthesis; thiamine diphosphate biosynthesis. Its function is as follows. Catalyzes the synthesis of the hydroxymethylpyrimidine phosphate (HMP-P) moiety of thiamine from aminoimidazole ribotide (AIR) in a radical S-adenosyl-L-methionine (SAM)-dependent reaction. The polypeptide is Phosphomethylpyrimidine synthase (Anaeromyxobacter sp. (strain Fw109-5)).